Consider the following 554-residue polypeptide: Urocanate hydratase (554 aa).

Residues Gly-49–Gly-50, Gln-127, Gly-173–Gly-175, Glu-193, Arg-198, Asn-239–Ala-240, Gln-260–His-264, Tyr-270–Ile-271, and Tyr-319 each bind NAD(+). Residue Cys-407 is part of the active site. Gly-489 provides a ligand contact to NAD(+).

Belongs to the urocanase family. Requires NAD(+) as cofactor.

The protein localises to the cytoplasm. The catalysed reaction is 4-imidazolone-5-propanoate = trans-urocanate + H2O. It functions in the pathway amino-acid degradation; L-histidine degradation into L-glutamate; N-formimidoyl-L-glutamate from L-histidine: step 2/3. Its function is as follows. Catalyzes the conversion of urocanate to 4-imidazolone-5-propionate. The sequence is that of Urocanate hydratase from Bacillus velezensis (strain DSM 23117 / BGSC 10A6 / LMG 26770 / FZB42) (Bacillus amyloliquefaciens subsp. plantarum).